A 293-amino-acid chain; its full sequence is Probable porphobilinogen deaminase (293 aa).

Cysteine 233 carries the post-translational modification S-(dipyrrolylmethanemethyl)cysteine.

Belongs to the HMBS family. Requires dipyrromethane as cofactor.

The enzyme catalyses 4 porphobilinogen + H2O = hydroxymethylbilane + 4 NH4(+). The protein operates within porphyrin-containing compound metabolism; protoporphyrin-IX biosynthesis; coproporphyrinogen-III from 5-aminolevulinate: step 2/4. Its function is as follows. Tetrapolymerization of the monopyrrole PBG into the hydroxymethylbilane pre-uroporphyrinogen in several discrete steps. The sequence is that of Probable porphobilinogen deaminase from Saccharolobus islandicus (strain M.16.27) (Sulfolobus islandicus).